We begin with the raw amino-acid sequence, 1071 residues long: ATP-dependent helicase/deoxyribonuclease subunit B (1071 aa).

Belongs to the helicase family. AddB/RexB type 2 subfamily. In terms of assembly, heterodimer of AddA and RexB. Requires Mg(2+) as cofactor.

In terms of biological role, the heterodimer acts as both an ATP-dependent DNA helicase and an ATP-dependent, dual-direction single-stranded exonuclease. Recognizes the chi site generating a DNA molecule suitable for the initiation of homologous recombination. This subunit has 5' -&gt; 3' nuclease activity but not helicase activity. The sequence is that of ATP-dependent helicase/deoxyribonuclease subunit B from Streptococcus pyogenes serotype M49 (strain NZ131).